The sequence spans 755 residues: Tryptophan 2-monooxygenase (755 aa).

Residues serine 247, glutamate 267, lysine 275, and arginine 295 each contribute to the FMN site. Residue arginine 295 coordinates substrate.

It belongs to the tryptophan 2-monooxygenase family. FMN serves as cofactor.

It catalyses the reaction L-tryptophan + O2 = indole-3-acetamide + CO2 + H2O. It functions in the pathway plant hormone metabolism; auxin biosynthesis. The polypeptide is Tryptophan 2-monooxygenase (tms1) (Rhizobium radiobacter (Agrobacterium tumefaciens)).